The following is a 643-amino-acid chain: Sodium-dependent nutrient amino acid transporter 1 (643 aa).

The segment at methionine 1 to arginine 38 is disordered. The Cytoplasmic segment spans residues methionine 1–asparagine 40. Residues proline 8–threonine 26 are compositionally biased toward low complexity. Over residues glutamate 27 to alanine 36 the composition is skewed to basic and acidic residues. The next 3 membrane-spanning stretches (helical) occupy residues tryptophan 41–valine 61, glycine 74–leucine 94, and serine 111–isoleucine 131. Asparagine 185, asparagine 190, and asparagine 200 each carry an N-linked (GlcNAc...) asparagine glycan. The next 9 membrane-spanning stretches (helical) occupy residues proline 231–methionine 251, alanine 260–valine 280, alanine 309–serine 329, isoleucine 343–leucine 363, leucine 403–leucine 423, valine 449–leucine 469, threonine 476–leucine 496, cysteine 518–isoleucine 538, and valine 554–tyrosine 574.

It belongs to the sodium:neurotransmitter symporter (SNF) (TC 2.A.22) family.

Its subcellular location is the membrane. Unusual broad substrate spectrum amino acid:sodium cotransporter that promotes absorption of the D isomers of essential amino acids. Neutral amino acids are the preferred substrates, especially methionine and phenylalanine. The sequence is that of Sodium-dependent nutrient amino acid transporter 1 from Drosophila simulans (Fruit fly).